Reading from the N-terminus, the 329-residue chain is Malate dehydrogenase (329 aa).

Position 12-18 (12-18) interacts with NAD(+); the sequence is GAAGQIG. Substrate contacts are provided by R93 and R99. Residues N106, Q113, and 130-132 contribute to the NAD(+) site; that span reads TGN. Residues N132 and R163 each contribute to the substrate site. Catalysis depends on H188, which acts as the Proton acceptor.

Belongs to the LDH/MDH superfamily. MDH type 2 family.

It carries out the reaction (S)-malate + NAD(+) = oxaloacetate + NADH + H(+). In terms of biological role, catalyzes the reversible oxidation of malate to oxaloacetate. This chain is Malate dehydrogenase, found in Mycobacterium leprae (strain TN).